Reading from the N-terminus, the 331-residue chain is Pectinesterase (331 aa).

A signal peptide spans 1–17 (MVKSILASVLFAATALA). Q138 provides a ligand contact to substrate. Residue D161 is the Proton donor of the active site. The active-site Nucleophile is the D182. Positions 247 and 249 each coordinate substrate.

It belongs to the pectinesterase family.

It localises to the secreted. It carries out the reaction [(1-&gt;4)-alpha-D-galacturonosyl methyl ester](n) + n H2O = [(1-&gt;4)-alpha-D-galacturonosyl](n) + n methanol + n H(+). It functions in the pathway glycan metabolism; pectin degradation; 2-dehydro-3-deoxy-D-gluconate from pectin: step 1/5. Involved in maceration and soft-rotting of plant tissue. This chain is Pectinesterase (pme1), found in Aspergillus niger.